We begin with the raw amino-acid sequence, 457 residues long: Dihydrolipoyl dehydrogenase (457 aa).

FAD is bound by residues 32-40 (EKQYFGGVC), lysine 49, and alanine 113. Residues cysteine 40 and cysteine 45 are joined by a disulfide bond. Residues 178–182 (GGGVI), valine 235, and 262–265 (SIGR) each bind NAD(+). FAD contacts are provided by aspartate 303 and alanine 311. Histidine 437 serves as the catalytic Proton acceptor.

Belongs to the class-I pyridine nucleotide-disulfide oxidoreductase family. As to quaternary structure, homodimer. It depends on FAD as a cofactor.

It localises to the cytoplasm. It carries out the reaction N(6)-[(R)-dihydrolipoyl]-L-lysyl-[protein] + NAD(+) = N(6)-[(R)-lipoyl]-L-lysyl-[protein] + NADH + H(+). Functionally, lipoamide dehydrogenase is a component of the alpha-ketoacid dehydrogenase complexes. The polypeptide is Dihydrolipoyl dehydrogenase (pdhD) (Mycoplasma genitalium (strain ATCC 33530 / DSM 19775 / NCTC 10195 / G37) (Mycoplasmoides genitalium)).